We begin with the raw amino-acid sequence, 316 residues long: Probable cell division protein WhiA (316 aa).

The H-T-H motif DNA-binding region spans 275-309 (TLKELGEMVASGKISKSGINHRLRKLDEIAEQLRT).

It belongs to the WhiA family.

The protein resides in the cytoplasm. Its subcellular location is the nucleoid. Its function is as follows. Involved in cell division and chromosome segregation. May influence the activity of FtsZ. Binds DNA, but does not seem to function as a transcription factor. In Bacillus subtilis (strain 168), this protein is Probable cell division protein WhiA.